The primary structure comprises 272 residues: Ingression protein fic1 (272 aa).

The C2 domain occupies 1–107 (MSKNPLGTLV…MKEELQSEWY (107 aa)). Positions 155–187 (VPKKPSKPSKPRKKVPVSHPLPPTPPSREEHVS) are disordered. The segment covering 158 to 170 (KPSKPSKPRKKVP) has biased composition (basic residues).

Belongs to the INN1/fic1 family. Interacts with cdc15 and imp2.

It localises to the cytoplasm. The protein resides in the nucleus. Functionally, involved in the ingression of the plasma membrane during cytokinesis, leading to the separation of the daughter cells. Unlike its S.cerevisiae ortholog INN1, it does not play an essential role, probably because the actinomyosin ring is connected to the cell cortex by many more proteins. The sequence is that of Ingression protein fic1 (fic1) from Schizosaccharomyces pombe (strain 972 / ATCC 24843) (Fission yeast).